The sequence spans 163 residues: Small heat shock protein C4 (163 aa).

Residues 53–163 form the sHSP domain; the sequence is YNNKILSPRT…QSKAKKIKIS (111 aa).

Belongs to the small heat shock protein (HSP20) family.

The chain is Small heat shock protein C4 (hspc4-1) from Rickettsia felis (strain ATCC VR-1525 / URRWXCal2) (Rickettsia azadi).